The following is a 576-amino-acid chain: Formate--tetrahydrofolate ligase 2 (576 aa).

69-76 (TPLGEGKT) serves as a coordination point for ATP.

It belongs to the formate--tetrahydrofolate ligase family.

The catalysed reaction is (6S)-5,6,7,8-tetrahydrofolate + formate + ATP = (6R)-10-formyltetrahydrofolate + ADP + phosphate. The protein operates within one-carbon metabolism; tetrahydrofolate interconversion. The sequence is that of Formate--tetrahydrofolate ligase 2 from Rubrobacter xylanophilus (strain DSM 9941 / JCM 11954 / NBRC 16129 / PRD-1).